The sequence spans 145 residues: MIGLIQRVERASVCVEGKEIGAIDRGLLVFVGIERADSAQQAEKLAQKLLNYRVFEDELGKMNLNVQQIGGELLLVSQFTLAANTQKGNRPSFDPAMAPQEAEPLFDYFCQTVHTHYPHTATGRFGADMRVHLINDGPVTFWLHV.

The Gly-cisPro motif, important for rejection of L-amino acids motif lies at 137 to 138; that stretch reads GP.

It belongs to the DTD family. Homodimer.

It localises to the cytoplasm. It carries out the reaction glycyl-tRNA(Ala) + H2O = tRNA(Ala) + glycine + H(+). The enzyme catalyses a D-aminoacyl-tRNA + H2O = a tRNA + a D-alpha-amino acid + H(+). Its function is as follows. An aminoacyl-tRNA editing enzyme that deacylates mischarged D-aminoacyl-tRNAs. Also deacylates mischarged glycyl-tRNA(Ala), protecting cells against glycine mischarging by AlaRS. Acts via tRNA-based rather than protein-based catalysis; rejects L-amino acids rather than detecting D-amino acids in the active site. By recycling D-aminoacyl-tRNA to D-amino acids and free tRNA molecules, this enzyme counteracts the toxicity associated with the formation of D-aminoacyl-tRNA entities in vivo and helps enforce protein L-homochirality. The sequence is that of D-aminoacyl-tRNA deacylase from Dichelobacter nodosus (strain VCS1703A).